Here is a 202-residue protein sequence, read N- to C-terminus: T-cell surface glycoprotein CD3 epsilon chain (202 aa).

The N-terminal stretch at 1–21 (MPSGSLWRVLGLCLLSVGAWG) is a signal peptide. The Extracellular portion of the chain corresponds to 22–125 (QEDNEDPLEP…NCVEVDTMTA (104 aa)). Positions 33–107 (PQTSASARYK…TSNSLEKNYL (75 aa)) constitute an Ig-like domain. Cysteines 54 and 96 form a disulfide. A helical membrane pass occupies residues 126–146 (VAIVVADVCITLGFLLLVYYW). Residues 147–202 (SKNKKASSVTMMRGPGAGGRPRGQNKEKPPPVPNPDYEPIRKGQQDLYSGLNQRGI) lie on the Cytoplasmic side of the membrane. A disordered region spans residues 156–202 (TMMRGPGAGGRPRGQNKEKPPPVPNPDYEPIRKGQQDLYSGLNQRGI). An NUMB-binding region region spans residues 170 to 187 (QNKEKPPPVPNPDYEPIR). In terms of domain architecture, ITAM spans 173–200 (EKPPPVPNPDYEPIRKGQQDLYSGLNQR). Residues 174–181 (KPPPVPNP) are proline-rich sequence. Phosphotyrosine occurs at positions 183 and 194. Positions 192–202 (DLYSGLNQRGI) are enriched in polar residues.

As to quaternary structure, the TCR-CD3 complex is composed of a CD3D/CD3E and a CD3G/CD3E heterodimers that preferentially associate with TCRalpha and TCRbeta, respectively, to form TCRalpha/CD3E/CD3G and TCRbeta/CD3G/CD3E trimers. In turn, the hexamer interacts with CD3Z homodimer to form the TCR-CD3 complex. Alternatively, TCRalpha and TCRbeta can be replaced by TCRgamma and TCRdelta. Interacts with CD6. Interacts (via Proline-rich sequence) with NCK1; the interaction is ligand dependent but independent of tyrosine kinase activation. Post-translationally, phosphorylated on Tyr residues after T-cell receptor triggering by LCK in association with CD4/CD8.

It localises to the cell membrane. Part of the TCR-CD3 complex present on T-lymphocyte cell surface that plays an essential role in adaptive immune response. When antigen presenting cells (APCs) activate T-cell receptor (TCR), TCR-mediated signals are transmitted across the cell membrane by the CD3 chains CD3D, CD3E, CD3G and CD3Z. All CD3 chains contain immunoreceptor tyrosine-based activation motifs (ITAMs) in their cytoplasmic domain. Upon TCR engagement, these motifs become phosphorylated by Src family protein tyrosine kinases LCK and FYN, resulting in the activation of downstream signaling pathways. In addition of this role of signal transduction in T-cell activation, CD3E plays an essential role in correct T-cell development. Also participates in internalization and cell surface down-regulation of TCR-CD3 complexes via endocytosis sequences present in CD3E cytosolic region. In addition to its role as a TCR coreceptor, it serves as a receptor for ITPRIPL1. Ligand recognition inhibits T-cell activation by promoting interaction with NCK1, which prevents CD3E-ZAP70 interaction and blocks the ERK-NFkB signaling cascade and calcium influx. The polypeptide is T-cell surface glycoprotein CD3 epsilon chain (CD3E) (Felis catus (Cat)).